Reading from the N-terminus, the 165-residue chain is UPF0114 protein Ent638_3411 (165 aa).

Transmembrane regions (helical) follow at residues 15-35 (LLAP…IKFF), 53-73 (LILV…LVMV), and 136-156 (LMWY…MGYL).

The protein belongs to the UPF0114 family.

It localises to the cell membrane. The protein is UPF0114 protein Ent638_3411 of Enterobacter sp. (strain 638).